A 215-amino-acid chain; its full sequence is Probable glutathione S-transferase GSTF2 (215 aa).

The GST N-terminal domain maps to 2-83; that stretch reads APMKLYGSTL…YVCRKNKPEL (82 aa). Residues Ser12, 41-42, 54-55, and 67-68 each bind glutathione; these read HK, QV, and ES. The GST C-terminal domain occupies 88–215; it reads DLKESAMVDV…KVASLMKPPA (128 aa).

It belongs to the GST superfamily. Phi family. Constitutively expressed in roots. Expressed in anthers, callus, panicles, sheaths and stems (at protein level).

It carries out the reaction RX + glutathione = an S-substituted glutathione + a halide anion + H(+). Conjugation of reduced glutathione to a wide number of exogenous and endogenous hydrophobic electrophiles. This is Probable glutathione S-transferase GSTF2 (GSTF2) from Oryza sativa subsp. japonica (Rice).